A 223-amino-acid chain; its full sequence is 2-C-methyl-D-erythritol 4-phosphate cytidylyltransferase (223 aa).

Belongs to the IspD/TarI cytidylyltransferase family. IspD subfamily.

It carries out the reaction 2-C-methyl-D-erythritol 4-phosphate + CTP + H(+) = 4-CDP-2-C-methyl-D-erythritol + diphosphate. It functions in the pathway isoprenoid biosynthesis; isopentenyl diphosphate biosynthesis via DXP pathway; isopentenyl diphosphate from 1-deoxy-D-xylulose 5-phosphate: step 2/6. Its function is as follows. Catalyzes the formation of 4-diphosphocytidyl-2-C-methyl-D-erythritol from CTP and 2-C-methyl-D-erythritol 4-phosphate (MEP). In Prochlorococcus marinus (strain AS9601), this protein is 2-C-methyl-D-erythritol 4-phosphate cytidylyltransferase.